The chain runs to 217 residues: Cytidylate kinase (217 aa).

An ATP-binding site is contributed by 10–18; sequence GPAGAGKST.

The protein belongs to the cytidylate kinase family. Type 1 subfamily.

The protein localises to the cytoplasm. It carries out the reaction CMP + ATP = CDP + ADP. The catalysed reaction is dCMP + ATP = dCDP + ADP. This chain is Cytidylate kinase, found in Alkaliphilus oremlandii (strain OhILAs) (Clostridium oremlandii (strain OhILAs)).